Consider the following 411-residue polypeptide: Mitotic apparatus protein p62 (411 aa).

Composition is skewed to acidic residues over residues 134–156, 183–201, and 246–321; these read AYEV…EEEE, ELDE…EEEI, and DDDE…EEDS. Positions 134–378 are disordered; that stretch reads AYEVGDEDLE…KSPSKPKKEE (245 aa). A compositionally biased stretch (basic and acidic residues) spans 351–367; that stretch reads GMKEKKTYSLEDMKQDL.

Belongs to the nucleoplasmin family. Phosphorylated by CaM-kinase II in vitro.

It localises to the nucleus. In terms of biological role, required for mitotic progression. Binds to chromatin. This Lytechinus pictus (Painted sea urchin) protein is Mitotic apparatus protein p62.